The following is a 934-amino-acid chain: Aconitate hydratase A (934 aa).

A disordered region spans residues Glu-398–Asn-454. The span at Leu-404 to Glu-420 shows a compositional bias: basic and acidic residues. Residues Ser-427–Ser-445 show a composition bias toward low complexity. 3 residues coordinate [4Fe-4S] cluster: Cys-473, Cys-539, and Cys-542.

Belongs to the aconitase/IPM isomerase family. As to quaternary structure, monomer. Requires [4Fe-4S] cluster as cofactor.

The enzyme catalyses citrate = D-threo-isocitrate. It catalyses the reaction (2S,3R)-3-hydroxybutane-1,2,3-tricarboxylate = 2-methyl-cis-aconitate + H2O. Its pathway is carbohydrate metabolism; tricarboxylic acid cycle; isocitrate from oxaloacetate: step 2/2. It participates in organic acid metabolism; propanoate degradation. Involved in the catabolism of short chain fatty acids (SCFA) via the tricarboxylic acid (TCA)(acetyl degradation route) and probably via the 2-methylcitrate cycle I (propionate degradation route). Catalyzes the reversible isomerization of citrate to isocitrate via cis-aconitate. Could catalyze the hydration of 2-methyl-cis-aconitate to yield (2R,3S)-2-methylisocitrate. The apo form of AcnA functions as a RNA-binding regulatory protein. The chain is Aconitate hydratase A (acn) from Corynebacterium diphtheriae (strain ATCC 700971 / NCTC 13129 / Biotype gravis).